The following is a 765-amino-acid chain: Putative U-box domain-containing protein 50 (765 aa).

A coiled-coil region spans residues 198 to 391; the sequence is QEIENYFQQL…NRRIEFCKER (194 aa). Positions 422-765 constitute a Protein kinase domain; it reads SDRLRLKSGG…HSKRAAQASS (344 aa). ATP-binding positions include 428–436 and Lys449; that span reads KSGGNWTNV. Residues 688–762 form the U-box domain; sequence DIPSVFMCPI…QDWHSKRAAQ (75 aa).

The protein belongs to the protein kinase superfamily. Ser/Thr protein kinase family.

The enzyme catalyses S-ubiquitinyl-[E2 ubiquitin-conjugating enzyme]-L-cysteine + [acceptor protein]-L-lysine = [E2 ubiquitin-conjugating enzyme]-L-cysteine + N(6)-ubiquitinyl-[acceptor protein]-L-lysine.. It participates in protein modification; protein ubiquitination. In terms of biological role, functions as an E3 ubiquitin ligase. This chain is Putative U-box domain-containing protein 50 (PUB50), found in Arabidopsis thaliana (Mouse-ear cress).